Here is a 1241-residue protein sequence, read N- to C-terminus: DNA-directed RNA polymerase subunit beta (1241 aa).

The disordered stretch occupies residues 1186–1210; sequence EDEIVPTAEKRSSNQDEEALELVDN. Residues 1200-1210 are compositionally biased toward acidic residues; it reads QDEEALELVDN.

The protein belongs to the RNA polymerase beta chain family. The RNAP catalytic core consists of 2 alpha, 1 beta, 1 beta' and 1 omega subunit. When a sigma factor is associated with the core the holoenzyme is formed, which can initiate transcription.

It catalyses the reaction RNA(n) + a ribonucleoside 5'-triphosphate = RNA(n+1) + diphosphate. DNA-dependent RNA polymerase catalyzes the transcription of DNA into RNA using the four ribonucleoside triphosphates as substrates. The polypeptide is DNA-directed RNA polymerase subunit beta (Clostridium novyi (strain NT)).